The following is a 221-amino-acid chain: Lectin L6 (221 aa).

6 repeat units span residues 1–38 (VQWH…PCYD), 39–75 (GQWT…VDGS), 76–113 (GSWV…KPCN), 114–150 (GAWT…VDGS), 151–188 (GSWQ…KPCS), and 189–221 (GQWS…YRSG). The 6 X approximate tandem repeats stretch occupies residues 1 to 221 (VQWHQIPGKL…NSVDNIYRSG (221 aa)). C32 and C36 are joined by a disulfide. Residues C108 and C112 are joined by a disulfide bond. A disulfide bridge links C183 with C187.

Belongs to the tectonin family. As to expression, hemocytes.

It is found in the cytoplasmic vesicle. It localises to the secretory vesicle. Its function is as follows. Lipopolysaccharide-binding protein with Gram-negative antibacterial activity. Binds zinc and calcium. In Tachypleus tridentatus (Japanese horseshoe crab), this protein is Lectin L6.